We begin with the raw amino-acid sequence, 400 residues long: Eukaryotic translation initiation factor 3 subunit M (400 aa).

The 175-residue stretch at 180 to 354 (LIAKIYSALV…QSFAVHRAQK (175 aa)) folds into the PCI domain.

The protein belongs to the eIF-3 subunit M family. In terms of assembly, component of the eukaryotic translation initiation factor 3 (eIF-3) complex.

Its subcellular location is the cytoplasm. Component of the eukaryotic translation initiation factor 3 (eIF-3) complex, which is involved in protein synthesis of a specialized repertoire of mRNAs and, together with other initiation factors, stimulates binding of mRNA and methionyl-tRNAi to the 40S ribosome. The eIF-3 complex specifically targets and initiates translation of a subset of mRNAs involved in cell proliferation. This is Eukaryotic translation initiation factor 3 subunit M from Yarrowia lipolytica (strain CLIB 122 / E 150) (Yeast).